A 341-amino-acid polypeptide reads, in one-letter code: N-(sulfonatooxy)alkenimidothioic acid sulfate-lyase (epithionitrile-forming) (341 aa).

Residues 1-24 (MAPTLQGQWIKVGQKGGTGPGPRS) are disordered. Kelch repeat units lie at residues 34 to 82 (KLYS…VRMV), 87 to 133 (KIYI…FHSM), 139 to 194 (HVYV…VVQG), and 203 to 249 (ATSI…AHAV). A (Z)-N-(sulfonatooxy)alkanimidothioate-binding residues include Lys46, Arg94, Thr129, Phe130, Arg157, Gly186, Lys211, and Val244. Arg94 (proton donor) is an active-site residue. Arg157 serves as the catalytic Proton donor. Fe(2+) is bound by residues Glu260, Asp264, and His268. Trp303 contributes to the a (Z)-N-(sulfonatooxy)alkanimidothioate binding site.

As to quaternary structure, homodimer. Interacts with WRKY53. It depends on Fe(2+) as a cofactor. Expressed in epidermal cells of all above-ground organs except the anthers, in cambial cells of leaf and stem vascular bundles, and in glucosinolates rich S-cells found in stems just below the inflorescence. Absent from roots.

It localises to the cytoplasm. The protein localises to the nucleus. It carries out the reaction a (Z)-N-(sulfonatooxy)alkenimidothioate = an epithionitrile + sulfate. The enzyme catalyses a (Z)-N-(sulfonatooxy)alkanimidothioate = a nitrile + sulfur + sulfate. The catalysed reaction is (Z)-(indol-3-yl)-N-(sulfonatooxy)methanimidothioate = (indol-3-yl)acetonitrile + sulfur + sulfate. With respect to regulation, not dependent on the presence of Fe(2+) although supplemental Fe(2+) increases nitriles formation. Its function is as follows. Specifier protein that contributes to constitutive and herbivore-induced simple nitrile formation. Converts glucosinolates both to epithionitriles and to simple nitriles in the presence of myrosinase. Promotes the formation of epithionitriles after hydrolysis of alkenylglucosinolates containing a terminal double bond. Mediates indol-3-ylacetonitrile (IACN) production from indol-3-ylmethylglucosinolate (glucobrassicin). Triggers the production of 3,4-epithiobutylnitrile from 2-propenylisothiocyanate, product of 2-propenylglucosinolate (sinigrin) catalysis by myrosinase. Seems inactive toward benzylglucosinolate (glucotropaeolin). Acts as a negative regulator of senescence. This chain is N-(sulfonatooxy)alkenimidothioic acid sulfate-lyase (epithionitrile-forming), found in Arabidopsis thaliana (Mouse-ear cress).